The following is a 359-amino-acid chain: 3-dehydroquinate synthase (359 aa).

Residues 71 to 76, 104 to 108, 128 to 129, lysine 141, lysine 150, and 168 to 171 each bind NAD(+); these read DGEQYK, GVVGD, TT, and TLNT. Residues glutamate 183, histidine 247, and histidine 264 each coordinate Zn(2+).

This sequence belongs to the sugar phosphate cyclases superfamily. Dehydroquinate synthase family. The cofactor is Co(2+). Zn(2+) serves as cofactor. It depends on NAD(+) as a cofactor.

The protein localises to the cytoplasm. It carries out the reaction 7-phospho-2-dehydro-3-deoxy-D-arabino-heptonate = 3-dehydroquinate + phosphate. Its pathway is metabolic intermediate biosynthesis; chorismate biosynthesis; chorismate from D-erythrose 4-phosphate and phosphoenolpyruvate: step 2/7. Catalyzes the conversion of 3-deoxy-D-arabino-heptulosonate 7-phosphate (DAHP) to dehydroquinate (DHQ). The polypeptide is 3-dehydroquinate synthase (Coxiella burnetii (strain Dugway 5J108-111)).